The primary structure comprises 151 residues: Protein Turandot Z (151 aa).

An N-terminal signal peptide occupies residues 1-23 (MSRLIHLSFVLALLACLTGTISA).

This sequence belongs to the Turandot family.

Its subcellular location is the secreted. A humoral factor that may play a role in stress tolerance. The sequence is that of Protein Turandot Z from Drosophila persimilis (Fruit fly).